The sequence spans 618 residues: Protein fem-1 homolog C (618 aa).

7 ANK repeats span residues 2-31 (DLKT…DREV), 40-70 (NGAT…PVEL), 82-111 (EGAP…SVNN), 115-144 (TNST…DLEV), 148-177 (HGHT…DVNR), 181-210 (KGNT…SMEK), and 213-243 (YGMT…GLAE). TPR repeat units lie at residues 245-279 (ISAL…RHSE) and 337-370 (SYYI…QQSN). ANK repeat units follow at residues 482–524 (NGFS…DVNS) and 528–557 (DDNS…HFDS).

It belongs to the fem-1 family. As to quaternary structure, component of a CRL2 E3 ubiquitin-protein ligase complex, also named ECS (Elongin BC-CUL2/5-SOCS-box protein) complex.

It functions in the pathway protein modification; protein ubiquitination. In terms of biological role, substrate-recognition component of a Cul2-RING (CRL2) E3 ubiquitin-protein ligase complex of the DesCEND (destruction via C-end degrons) pathway, which recognizes a C-degron located at the extreme C terminus of target proteins, leading to their ubiquitination and degradation. The C-degron recognized by the DesCEND pathway is usually a motif of less than ten residues and can be present in full-length proteins, truncated proteins or proteolytically cleaved forms. The CRL2(FEM1C) complex specifically recognizes proteins with an arginine at the C-terminus: recognizes and binds proteins ending with -Lys/Arg-Xaa-Arg and -Lys/Arg-Xaa-Xaa-Arg C-degrons, leading to their ubiquitination and degradation. This Danio rerio (Zebrafish) protein is Protein fem-1 homolog C.